A 314-amino-acid chain; its full sequence is Olfactory receptor 10A3 (314 aa).

Residues 1–25 lie on the Extracellular side of the membrane; the sequence is MKRQNQSCVVEFILLGFSNFPELQV. The N-linked (GlcNAc...) asparagine glycan is linked to Asn5. The chain crosses the membrane as a helical span at residues 26–46; sequence QLFGVFLVIYVVTLMGNAIIT. At 47–54 the chain is on the cytoplasmic side; that stretch reads VIISLNQS. A helical transmembrane segment spans residues 55-75; the sequence is LHVPMYLFLLNLSVVEVSFSA. At 76 to 99 the chain is on the extracellular side; that stretch reads VITPEMLVVLSTEKTMISFVGCFA. The cysteines at positions 97 and 189 are disulfide-linked. A helical transmembrane segment spans residues 100–120; that stretch reads QMYFILLFGGTECFLLGAMAY. Over 121-139 the chain is Cytoplasmic; that stretch reads DRFAAICHPLNYPVIMNRG. The helical transmembrane segment at 140–160 threads the bilayer; it reads VFMKLVIFSWISGIMVATVQT. Topologically, residues 161–197 are extracellular; it reads TWVFSFPFCGPNEINHLFCETPPVLELVCADTFLFEI. The helical transmembrane segment at 198–217 threads the bilayer; sequence YAFTGTILIVMVPFLLILLS. At 218-237 the chain is on the cytoplasmic side; that stretch reads YIRVLFAILKMPSTTGRQKA. Residues 238 to 258 form a helical membrane-spanning segment; the sequence is FSTCASHLTSVTLFYGTANMT. The Extracellular portion of the chain corresponds to 259–271; sequence YLQPKSGYSPETK. A helical transmembrane segment spans residues 272–292; it reads KLISLAYTLLTPLLNPLIYSL. The Cytoplasmic portion of the chain corresponds to 293-314; the sequence is RNSEMKRTLIKLWRRKVILHTF.

The protein belongs to the G-protein coupled receptor 1 family.

It is found in the cell membrane. In terms of biological role, odorant receptor. The chain is Olfactory receptor 10A3 (OR10A3) from Homo sapiens (Human).